The following is a 106-amino-acid chain: Iron-sulfur cluster assembly protein CyaY (106 aa).

The protein belongs to the frataxin family.

In terms of biological role, involved in iron-sulfur (Fe-S) cluster assembly. May act as a regulator of Fe-S biogenesis. This Shigella flexneri serotype 5b (strain 8401) protein is Iron-sulfur cluster assembly protein CyaY.